An 880-amino-acid polypeptide reads, in one-letter code: Translation initiation factor IF-2 (880 aa).

3 disordered regions span residues Lys51–Gly78, Tyr93–Asn116, and Lys142–Pro293. The segment covering Ser69–Gly78 has biased composition (polar residues). Residues Lys142–Asp229 are compositionally biased toward basic and acidic residues. The segment covering Gly269–Arg279 has biased composition (basic residues). The 170-residue stretch at Ser380 to Ser549 folds into the tr-type G domain. The G1 stretch occupies residues Gly389–Thr396. Gly389–Thr396 is a GTP binding site. Residues Gly414–His418 form a G2 region. Positions Asp435–Gly438 are G3. Residues Asp435–His439 and Asn489–Asp492 each bind GTP. The interval Asn489–Asp492 is G4. The interval Ser525–Lys527 is G5.

This sequence belongs to the TRAFAC class translation factor GTPase superfamily. Classic translation factor GTPase family. IF-2 subfamily.

Its subcellular location is the cytoplasm. In terms of biological role, one of the essential components for the initiation of protein synthesis. Protects formylmethionyl-tRNA from spontaneous hydrolysis and promotes its binding to the 30S ribosomal subunits. Also involved in the hydrolysis of GTP during the formation of the 70S ribosomal complex. In Psychromonas ingrahamii (strain DSM 17664 / CCUG 51855 / 37), this protein is Translation initiation factor IF-2.